The sequence spans 185 residues: Probable DNA-directed RNA polymerase subunit delta (185 aa).

Positions 14–81 constitute an HTH HARE-type domain; it reads LSMIEVAHAI…GDNTWGLRAW (68 aa). Positions 90–185 are disordered; it reads ATVGENEEDE…DEEDEDEDDE (96 aa). 2 stretches are compositionally biased toward acidic residues: residues 117 to 167 and 175 to 185; these read DTDD…DDGI and HDEEDEDEDDE.

This sequence belongs to the RpoE family. In terms of assembly, RNAP is composed of a core of 2 alpha, a beta and a beta' subunits. The core is associated with a delta subunit and one of several sigma factors.

Its function is as follows. Participates in both the initiation and recycling phases of transcription. In the presence of the delta subunit, RNAP displays an increased specificity of transcription, a decreased affinity for nucleic acids, and an increased efficiency of RNA synthesis because of enhanced recycling. The protein is Probable DNA-directed RNA polymerase subunit delta of Limosilactobacillus reuteri (strain DSM 20016) (Lactobacillus reuteri).